Reading from the N-terminus, the 748-residue chain is Sulfhydryl oxidase 1 (748 aa).

The first 32 residues, 1–32, serve as a signal peptide directing secretion; sequence MRRCGRLSGPPSLLLLLLLLSPLLFSGPGAYA. In terms of domain architecture, Thioredoxin spans 33–159; that stretch reads ARLSVLYSSS…RMRLIDALES (127 aa). Catalysis depends on nucleophile residues cysteine 73 and cysteine 76. 2 disulfide bridges follow: cysteine 73–cysteine 76 and cysteine 104–cysteine 113. N-linked (GlcNAc...) asparagine glycosylation is found at asparagine 133 and asparagine 246. Cysteine 396 and cysteine 408 are joined by a disulfide. One can recognise an ERV/ALR sulfhydryl oxidase domain in the interval 399–506; it reads SEPHFRGFPC…EDPHFPKVQW (108 aa). FAD-binding positions include arginine 404, tryptophan 411, histidine 415, aspartate 454, histidine 458, 481-488, lysine 503, and tryptophan 506; that span reads WTSHNRVN. Cysteine 452 and cysteine 455 are oxidised to a cystine. A disulfide bridge connects residues cysteine 512 and cysteine 515. The disordered stretch occupies residues 581–647; it reads GHEQAASAES…QENAPGQQHL (67 aa). Residues 628–638 are compositionally biased toward basic and acidic residues; it reads ERMEDHQRDMQ. Residues 711–731 form a helical membrane-spanning segment; that stretch reads ISLCVGLYSVSFMGLLAMYTY.

This sequence belongs to the quiescin-sulfhydryl oxidase (QSOX) family. Monomer. It depends on FAD as a cofactor. In terms of processing, N-glycosylated. O-glycosylated on Thr and Ser residues. As to expression, detected in skin (at protein level). Expressed in the seminal vesicles and skin.

The protein localises to the golgi apparatus membrane. It is found in the secreted. It carries out the reaction 2 R'C(R)SH + O2 = R'C(R)S-S(R)CR' + H2O2. Functionally, catalyzes the oxidation of sulfhydryl groups in peptide and protein thiols to disulfides with the reduction of oxygen to hydrogen peroxide. Plays a role in disulfide bond formation in a variety of extracellular proteins. In fibroblasts, required for normal incorporation of laminin into the extracellular matrix, and thereby for normal cell-cell adhesion and cell migration. In Mus musculus (Mouse), this protein is Sulfhydryl oxidase 1 (Qsox1).